The sequence spans 423 residues: MDFGLLPPEINSGRMYTGPGPGPMLAAATAWDGLAVELHATAAGYASELSALTGAWSGPSSTSMASAAAPYVAWMSATAVHAELAGAQARLAIAAYEAAFAATVPPPVIAANRAQLMVLIATNIFGQNTPAIMMTEAQYMEMWAQDAAAMYGYAGSSATASRMTAFTEPPQTTNHGQLGAQSSAVAQTAATAAGGNLQSAFPQLLSAVPRALQGLALPTASQSASATPQWVTDLGNLSTFLGGAVTGPYTFPGVLPPSGVPYLLGIQSVLVTQNGQGVSALLGKIGGKPITGALAPLAEFALHTPILGSEGLGGGSVSAGIGRAGLVGKLSVPQGWTVAAPEIPSPAAALQATRLAAAPIAATDGAGALLGGMALSGLAGRAAAGSTGHPIGSAAAPAVGAAAAAVEDLATEANIFVIPAMDD.

This sequence belongs to the mycobacterial PPE family.

Its function is as follows. Could be required for host endothelial-cell invasion and/or intracellular survival. This is an uncharacterized protein from Mycobacterium tuberculosis (strain CDC 1551 / Oshkosh).